The sequence spans 587 residues: 2-succinyl-5-enolpyruvyl-6-hydroxy-3-cyclohexene-1-carboxylate synthase (587 aa).

This sequence belongs to the TPP enzyme family. MenD subfamily. As to quaternary structure, homodimer. The cofactor is Mg(2+). Requires Mn(2+) as cofactor. Thiamine diphosphate is required as a cofactor.

It catalyses the reaction isochorismate + 2-oxoglutarate + H(+) = 5-enolpyruvoyl-6-hydroxy-2-succinyl-cyclohex-3-ene-1-carboxylate + CO2. It participates in quinol/quinone metabolism; 1,4-dihydroxy-2-naphthoate biosynthesis; 1,4-dihydroxy-2-naphthoate from chorismate: step 2/7. It functions in the pathway quinol/quinone metabolism; menaquinone biosynthesis. In terms of biological role, catalyzes the thiamine diphosphate-dependent decarboxylation of 2-oxoglutarate and the subsequent addition of the resulting succinic semialdehyde-thiamine pyrophosphate anion to isochorismate to yield 2-succinyl-5-enolpyruvyl-6-hydroxy-3-cyclohexene-1-carboxylate (SEPHCHC). The protein is 2-succinyl-5-enolpyruvyl-6-hydroxy-3-cyclohexene-1-carboxylate synthase of Chloroflexus aurantiacus (strain ATCC 29366 / DSM 635 / J-10-fl).